Consider the following 2000-residue polypeptide: Sodium channel protein type 3 subunit alpha (2000 aa).

Residues 1–128 are Cytoplasmic-facing; sequence MAQALLVPPG…KIAIKILVHS (128 aa). A disordered region spans residues 28–60; the sequence is RAAEEKAKKPKKEQDNDDENKPKPNSDLEAGKN. The span at 46-57 shows a compositional bias: basic and acidic residues; that stretch reads ENKPKPNSDLEA. One copy of the I repeat lies at 110–455; it reads ILTPLNPVRK…QQMLEQLKKQ (346 aa). Residues 129–146 form a helical membrane-spanning segment; the sequence is LFSMLIMCTILTNCVFMT. Residues 147–152 lie on the Extracellular side of the membrane; that stretch reads LSNPPD. The helical transmembrane segment at 153–174 threads the bilayer; the sequence is WTKNVEYTFTGIYTFESLIKIL. Topologically, residues 175-188 are cytoplasmic; that stretch reads ARGFCLEDFTFLRD. Residues 189-206 traverse the membrane as a helical segment; it reads PWNWLDFSVIVMAYVTEF. Over 207–213 the chain is Extracellular; sequence VSLGNVS. N-linked (GlcNAc...) asparagine glycosylation occurs at N211. A helical transmembrane segment spans residues 214–235; the sequence is ALRTFRVLRALKTISVIPGLKT. At 236 to 249 the chain is on the cytoplasmic side; it reads IVGALIQSVKKLSD. Residues 250–269 form a helical membrane-spanning segment; the sequence is VMILTVFCLSVFALIGLQLF. Topologically, residues 270-369 are extracellular; that stretch reads MGNLRNKCLQ…NYGYTSFDTF (100 aa). N290, N296, N302, N307, and N339 each carry an N-linked (GlcNAc...) asparagine glycan. The pore-forming intramembrane region spans 370 to 386; that stretch reads SWAFLSLFRLMTQDYWE. Over 387-397 the chain is Extracellular; the sequence is NLYQLTLRAAG. A helical membrane pass occupies residues 398-424; the sequence is KTYMIFFVLVIFLGSFYLVNLILAVVA. Topologically, residues 425-761 are cytoplasmic; sequence MAYEEQNQAT…LVNLIVMDPF (337 aa). A phosphoserine mark is found at S484, S485, and S486. Disordered regions lie at residues 493–528, 587–631, and 662–681; these read SKSAKEWRNRRKKRRQREHLEGNNKGERDSFPKSES, VGSE…ASMS, and ALTSPTGQLPPEGTTTETEV. Positions 500–509 are enriched in basic residues; it reads RNRRKKRRQR. Composition is skewed to basic and acidic residues over residues 510-528 and 596-610; these read EHLEGNNKGERDSFPKSES and DEHSTFEDSESRRDS. The span at 662–678 shows a compositional bias: polar residues; it reads ALTSPTGQLPPEGTTTE. The II repeat unit spans residues 742–1014; sequence CCDAWLKVKH…QIAVGRMQKG (273 aa). The chain crosses the membrane as a helical span at residues 762 to 779; sequence VDLAITICIVLNTLFMAM. At 780 to 787 the chain is on the extracellular side; that stretch reads EHYPMTEQ. The helical transmembrane segment at 788-812 threads the bilayer; it reads FSSVLTVGNLVFTGIFTAEMVLKII. Topologically, residues 813–822 are cytoplasmic; it reads AMDPYYYFQE. The helical transmembrane segment at 823–842 threads the bilayer; that stretch reads GWNIFDGIIVSLSLMELGLS. Residues 843–846 are Extracellular-facing; it reads NVEG. A helical transmembrane segment spans residues 847–865; the sequence is LSVLRSFRLLRVFKLAKSW. The Cytoplasmic segment spans residues 866–883; sequence PTLNMLIKIIGNSVGALG. A helical membrane pass occupies residues 884–904; that stretch reads NLTLVLAIIVFIFAVVGMQLF. At 905–929 the chain is on the extracellular side; sequence GKSYKECVCKINDDCTLPRWHMNDF. A disulfide bridge links C913 with C919. The pore-forming intramembrane region spans 930 to 945; that stretch reads FHSFLIVFRVLCGEWI. The Extracellular portion of the chain corresponds to 946–956; that stretch reads ETMWDCMEVAG. Residues C951 and C960 are joined by a disulfide bond. Residues 957 to 983 form a helical membrane-spanning segment; sequence QTMCLIVFMLVMVIGNLVVLNLFLALL. The Cytoplasmic segment spans residues 984–1205; that stretch reads LSSFSSDNLA…RKTCYSIVEH (222 aa). A disordered region spans residues 1118-1162; the sequence is EEFSSESELEESKEKLNATSSSEGSTVDVVLPREGEQAETEPEED. Residues 1188–1499 form an III repeat; it reads KGKIWWNLRK…KKYYNAMKKL (312 aa). A helical transmembrane segment spans residues 1206-1226; sequence NWFETFIVFMILLSSGALAFE. Residues 1227–1238 are Extracellular-facing; the sequence is DIYIEQRKTIKT. A helical membrane pass occupies residues 1239–1260; the sequence is MLEYADKVFTYIFILEMLLKWV. The Cytoplasmic portion of the chain corresponds to 1261–1266; that stretch reads AYGFQT. Residues 1267 to 1292 traverse the membrane as a helical segment; that stretch reads YFTNAWCWLDFLIVDVSLVSLVANAL. Topologically, residues 1293–1301 are extracellular; it reads GYSELGAIK. A helical membrane pass occupies residues 1302–1320; sequence SLRTLRALRPLRALSRFEG. The Cytoplasmic segment spans residues 1321 to 1333; sequence MRVVVNALVGAIP. The helical transmembrane segment at 1334 to 1356 threads the bilayer; the sequence is SIMNVLLVCLIFWLIFSIMGVNL. Residues 1357–1402 are Extracellular-facing; the sequence is FAGKFYHCVNMTTGNMFDISDVNNLSDCQALGKQARWKNVKVNFDN. Cysteines 1364 and 1384 form a disulfide. Residues N1366 and N1380 are each glycosylated (N-linked (GlcNAc...) asparagine). The pore-forming intramembrane region spans 1403–1419; the sequence is VGAGYLALLQVATFKGW. Residues 1420–1442 are Extracellular-facing; it reads MDIMYAAVDSRDVKLQPVYEENL. A helical membrane pass occupies residues 1443-1468; it reads YMYLYFVIFIIFGSFFTLNLFIGVII. The Cytoplasmic segment spans residues 1469–1526; sequence DNFNQQKKKFGGQDIFMTEEQKKYYNAMKKLGSKKPQKPIPRPANKFQGMVFDFVTRQ. A Phosphoserine; by PKC modification is found at S1501. The stretch at 1508 to 1806 is one IV repeat; sequence IPRPANKFQG…WEKFDPDATQ (299 aa). A helical membrane pass occupies residues 1527–1545; it reads VFDISIMILICLNMVTMMV. Topologically, residues 1546–1553 are extracellular; that stretch reads ETDDQGKY. Residues 1554 to 1577 traverse the membrane as a helical segment; the sequence is MTLVLSRINLVFIVLFTGEFVLKL. At 1578-1587 the chain is on the cytoplasmic side; the sequence is VSLRHYYFTI. The chain crosses the membrane as a helical span at residues 1588–1605; it reads GWNIFDFVVVILSIVGMF. The Extracellular segment spans residues 1606 to 1617; the sequence is LAEMIEKYFVSP. A helical membrane pass occupies residues 1618-1640; the sequence is TLFRVIRLARIGRILRLIKGAKG. Residues 1641 to 1653 are Cytoplasmic-facing; that stretch reads IRTLLFALMMSLP. A helical membrane pass occupies residues 1654 to 1677; the sequence is ALFNIGLLLFLVMFIYAIFGMSNF. The Extracellular segment spans residues 1678 to 1699; it reads AYVKKEAGIDDMFNFETFGNSM. The pore-forming intramembrane region spans 1700-1712; that stretch reads ICLFQITTSAGWD. Over 1713-1744 the chain is Extracellular; it reads GLLAPILNSAPPDCDPDTIHPGSSVKGDCGNP. A helical transmembrane segment spans residues 1745 to 1770; sequence SVGIFFFVSYIIISFLVVVNMYIAVI. Residues 1771-2000 are Cytoplasmic-facing; sequence LENFSVATEE…KGKEVRENQK (230 aa). One can recognise an IQ domain in the interval 1900–1929; that stretch reads EEVSAAIIQRNFRCYLLKQRLKNISSNYNK. The interval 1949–2000 is disordered; that stretch reads LNGNSTPEKTDGSSSTTSPPSYDSVTKPDKEKFEKDKPEKESKGKEVRENQK. Basic and acidic residues predominate over residues 1974–2000; the sequence is TKPDKEKFEKDKPEKESKGKEVRENQK.

It belongs to the sodium channel (TC 1.A.1.10) family. Nav1.3/SCN3A subfamily. In terms of assembly, heterooligomer of an alpha subunit, SCN3A, and 1 to 3 regulatory beta subunits including SCN1B and SCN2B; disulfide-linked with some beta subunits like SCN2B. Interacts with NEDD4L; could regulate expression of SCN3A at the plasma membrane through ubiquitination-regulated endocytosis. Interacts with the conotoxin GVIIJ. Post-translationally, may be ubiquitinated by NEDD4L; which would promote its endocytosis. Phosphorylation at Ser-1501 by PKC in a highly conserved cytoplasmic loop slows inactivation of the sodium channel and reduces peak sodium currents. Expressed in enterochromaffin cells in both colon and small bowel (at protein level).

The protein localises to the cell membrane. It localises to the basal cell membrane. The enzyme catalyses Na(+)(in) = Na(+)(out). Pore-forming subunit of Nav1.3, a voltage-gated sodium (Nav) channel that directly mediates the depolarizing phase of action potentials in excitable membranes. Navs, also called VGSCs (voltage-gated sodium channels) or VDSCs (voltage-dependent sodium channels), operate by switching between closed and open conformations depending on the voltage difference across the membrane. In the open conformation they allow Na(+) ions to selectively pass through the pore, along their electrochemical gradient. The influx of Na+ ions provokes membrane depolarization, initiating the propagation of electrical signals throughout cells and tissues. In some secretory cell types, it also participates in cell excitability through membrane depolarization and regulates cells responsiveness to stimuli triggering secretion. For instance, it controls the release of serotonin/5-hydroxytryptamine by enterochromaffin cells and is required for both glucagon- and glucose-induced insulin secretion in pancreatic endocrine cells. The protein is Sodium channel protein type 3 subunit alpha of Homo sapiens (Human).